The following is a 482-amino-acid chain: Zinc finger protein 223 (482 aa).

The KRAB domain occupies 8 to 78 (VTFKDVAVVF…DIATQREGNS (71 aa)). C2H2-type zinc fingers lie at residues 176 to 198 (HSCDECGKSFCYISALHIHQRVH), 204 to 226 (FKCDVCGKEFSQSLHLQTHQRVH), 232 to 254 (FKCEQCGRGFRCRSALTVHCKLH), 260 to 282 (YNCEACGRAFIHDFQLQKHQRIH), and 288 to 310 (FKCEICSVSFRLRSSLNRHCVVH). The C2H2-type 6; degenerate zinc-finger motif lies at 316-338 (NSTGEYGKGFIRRLDLCKHQTIH). C2H2-type zinc fingers lie at residues 344–366 (YNCKECGKSFRRSSYLLIHQRVH), 372–394 (YKCDKCGKSYITKSGLDLHHRAH), and 400–422 (YNCDDCGKSFRQASSILNHKRLH). The C2H2-type 10; degenerate zinc-finger motif lies at 428–450 (FKCEDCGKKLVYRSYRKDQQKNH).

This sequence belongs to the krueppel C2H2-type zinc-finger protein family.

Its subcellular location is the nucleus. Functionally, may be involved in transcriptional regulation. This Homo sapiens (Human) protein is Zinc finger protein 223 (ZNF223).